Reading from the N-terminus, the 415-residue chain is 1-deoxy-D-xylulose 5-phosphate reductoisomerase (415 aa).

NADPH contacts are provided by Thr10, Gly11, Ser12, Ile13, Gly36, Arg37, Asn38, and Asn128. Lys129 lines the 1-deoxy-D-xylulose 5-phosphate pocket. Glu130 provides a ligand contact to NADPH. Position 154 (Asp154) interacts with Mn(2+). 1-deoxy-D-xylulose 5-phosphate-binding residues include Ser155, Glu156, Ser192, and His215. A Mn(2+)-binding site is contributed by Glu156. Gly221 contacts NADPH. Residues Ser228, Asn233, Lys234, and Glu237 each contribute to the 1-deoxy-D-xylulose 5-phosphate site. Position 237 (Glu237) interacts with Mn(2+).

It belongs to the DXR family. It depends on Mg(2+) as a cofactor. Mn(2+) is required as a cofactor.

It catalyses the reaction 2-C-methyl-D-erythritol 4-phosphate + NADP(+) = 1-deoxy-D-xylulose 5-phosphate + NADPH + H(+). The protein operates within isoprenoid biosynthesis; isopentenyl diphosphate biosynthesis via DXP pathway; isopentenyl diphosphate from 1-deoxy-D-xylulose 5-phosphate: step 1/6. Catalyzes the NADPH-dependent rearrangement and reduction of 1-deoxy-D-xylulose-5-phosphate (DXP) to 2-C-methyl-D-erythritol 4-phosphate (MEP). In Synechococcus sp. (strain CC9605), this protein is 1-deoxy-D-xylulose 5-phosphate reductoisomerase.